A 578-amino-acid chain; its full sequence is Probable arginine--tRNA ligase, mitochondrial (578 aa).

A mitochondrion-targeting transit peptide spans 1 to 16 (MACGFRRAIACQLSRV). L-arginine is bound by residues 133–135 (SPN), His-144, Tyr-322, Asp-326, and Gln-350. The 'HIGH' region motif lies at 133–144 (SPNVAKKFHVGH). N6-acetyllysine is present on Lys-568.

The protein belongs to the class-I aminoacyl-tRNA synthetase family.

Its subcellular location is the mitochondrion membrane. The enzyme catalyses tRNA(Arg) + L-arginine + ATP = L-arginyl-tRNA(Arg) + AMP + diphosphate. In terms of biological role, catalyzes the attachment of arginine to tRNA(Arg) in a two-step reaction: arginine is first activated by ATP to form Arg-AMP and then transferred to the acceptor end of tRNA(Arg). The sequence is that of Probable arginine--tRNA ligase, mitochondrial (RARS2) from Homo sapiens (Human).